Consider the following 407-residue polypeptide: Rubber oxygenase (407 aa).

The segment at residues 1–30 (MDGFSRRRMLMTGGALGAVGALGAATRALA) is a signal peptide (tat-type signal). H198 lines the heme pocket.

It belongs to the rubber oxygenase Lcp family. It depends on heme b as a cofactor. Exported by the Tat system. The position of the signal peptide cleavage has not been experimentally proven.

The protein localises to the secreted. The protein operates within biopolymer metabolism. In terms of biological role, involved in the initial step of rubber degradation. Catalyzes the oxidative C-C cleavage of poly(cis-1,4-isoprene) in synthetic as well as in natural rubber by the addition of oxygen (O2) to the double bonds, leading to a mixture of oligonucleotide-isoprenoids with terminal keto and aldehyde groups (endo-type cleavage). The cleavage products are of different lengths, ranging from C20 (four isoprene units) to higher oligo-isoprenoids. Is not able to cleave low-molecular-weight substrate analogs with isoprenoid structure such as squalene (1,4-trans-isoprenoid), carotenoids, or alpha-tocopherol. The protein is Rubber oxygenase of Streptomyces sp. (strain K30).